Consider the following 20-residue polypeptide: Antifreeze protein (20 aa).

N-glycosylated and O-glycosylated.

The protein localises to the secreted. It localises to the extracellular space. Antifreeze proteins bind to the surface of ice crystals and inhibit the growth of these crystals, this inhibition causes thermal hysteresis. Causes the shape of ice crystals to change from hexagonal to a bipyramidal shape with rugged facets. Inhibits recrystallization of ice crystals. The protein is Antifreeze protein of Antarctomyces psychrotrophicus.